A 547-amino-acid polypeptide reads, in one-letter code: Sodium-coupled neutral amino acid transporter 4 (547 aa).

Residues 1 to 34 (MDPMELNNVSIEPDGDSCSGDSIQDSYTGMENSD) form a disordered region. Topologically, residues 1–104 (MDPMELNNVS…GLSYAMANTG (104 aa)) are extracellular. Positions 19 to 31 (SGDSIQDSYTGME) are enriched in polar residues. Phosphoserine is present on Ser-49. The chain crosses the membrane as a helical span at residues 105-125 (IILFIIMLLTVAILSLYSVHL). The Cytoplasmic segment spans residues 126–151 (LLKTAKEGGSLIYEKLGEKAFGWPGK). A helical membrane pass occupies residues 152–172 (IGAFISITMQNIGAMSSYLFI). The Extracellular segment spans residues 173 to 195 (IKYELPEVIRAFMGLEENTGEWY). A helical transmembrane segment spans residues 196 to 216 (LNGNYLVLFVSVGIILPLSLL). Residues 217–220 (KNLG) are Cytoplasmic-facing. The helical transmembrane segment at 221–241 (YLGYTSGFSLSCMVFFVSVVI) threads the bilayer. Over 242–332 (YKKFQIPCPL…PKYFVFNSRT (91 aa)) the chain is Extracellular. The cysteines at positions 249 and 321 are disulfide-linked. Residues Asn-260, Asn-264, and Asn-276 are each glycosylated (N-linked (GlcNAc...) asparagine). Residues 333 to 353 (AYAIPILAFAFVCHPEVLPIY) form a helical membrane-spanning segment. The Cytoplasmic portion of the chain corresponds to 354–369 (SELKDRSRRKMQTVSN). Residues 370–390 (ISISGMLVMYLLAALFGYLSF) traverse the membrane as a helical segment. Residues 391–411 (YGDVEDELLHAYSKVYTFDTA) lie on the Extracellular side of the membrane. Residues 412-432 (LLMVRLAVLVAVTLTVPIVLF) traverse the membrane as a helical segment. The Cytoplasmic portion of the chain corresponds to 433–453 (PIRTSVITLLFPRKPFSWLKH). Residues 454-474 (FGIAAIIIALNNILVILVPTI) form a helical membrane-spanning segment. Over 475–476 (KY) the chain is Extracellular. The chain crosses the membrane as a helical span at residues 477–497 (IFGFIGASSATMLIFILPAAF). Topologically, residues 498-514 (YLKLVKKEPLRSPQKIG) are cytoplasmic. A helical transmembrane segment spans residues 515 to 535 (ALVFLVTGIIFMMGSMALIIL). Residues 536–547 (DWIYNPPNPNHH) are Extracellular-facing.

It belongs to the amino acid/polyamine transporter 2 family. The disulfide bond plays an important role in substrate transport, but has no effect on trafficking to the cell surface. Detected in liver, in hepatocytes surrounding the central vein. Not detected in heart, kidney, brain, lung, small intestine, spleen and thymus. Highly expressed in placenta.

The protein resides in the cell membrane. Its subcellular location is the cell projection. The protein localises to the microvillus membrane. The enzyme catalyses L-alanine(in) + Na(+)(in) = L-alanine(out) + Na(+)(out). The catalysed reaction is L-methionine(in) + Na(+)(in) = L-methionine(out) + Na(+)(out). It catalyses the reaction L-asparagine(in) + Na(+)(in) = L-asparagine(out) + Na(+)(out). It carries out the reaction L-threonine(in) + Na(+)(in) = L-threonine(out) + Na(+)(out). The enzyme catalyses L-serine(in) + Na(+)(in) = L-serine(out) + Na(+)(out). The catalysed reaction is glycine(in) + Na(+)(in) = glycine(out) + Na(+)(out). It catalyses the reaction L-glutamine(in) + Na(+)(in) = L-glutamine(out) + Na(+)(out). It carries out the reaction L-histidine(in) + Na(+)(in) = L-histidine(out) + Na(+)(out). The enzyme catalyses L-cysteine(in) + Na(+)(in) = L-cysteine(out) + Na(+)(out). The catalysed reaction is L-proline(in) + Na(+)(in) = L-proline(out) + Na(+)(out). Its function is as follows. Symporter that cotransports neutral amino acids and sodium ions from the extraccellular to the intracellular side of the cell membrane. The transport is electrogenic, pH dependent and partially tolerates substitution of Na(+) by Li(+). Preferentially transports smaller amino acids, such as glycine, L-alanine, L-serine, L-asparagine and L-threonine, followed by L-cysteine, L-histidine, L-proline and L-glutamine and L-methionine. The protein is Sodium-coupled neutral amino acid transporter 4 of Mus musculus (Mouse).